A 720-amino-acid chain; its full sequence is Engulfment and cell motility protein 3 (720 aa).

One can recognise an ELMO domain in the interval 307–479 (EQREQLQALR…VVREQLARTL (173 aa)). Positions 541–663 (LRLCEGMLFR…WTDGLSALLG (123 aa)) constitute a PH domain.

In terms of assembly, probably interacts directly with the SH3-domain of DOCK1 via its SH3-binding site. Part of a complex with DOCK1 and RAC1. Interacts with ADGRB3.

The protein localises to the cytoplasm. Functionally, involved in cytoskeletal rearrangements required for phagocytosis of apoptotic cells and cell motility. Acts in association with DOCK1 and CRK. Was initially proposed to be required in complex with DOCK1 to activate Rac Rho small GTPases. May enhance the guanine nucleotide exchange factor (GEF) activity of DOCK1. The chain is Engulfment and cell motility protein 3 (Elmo3) from Rattus norvegicus (Rat).